A 395-amino-acid polypeptide reads, in one-letter code: MVMGTPSSLDEIRKAQRADGPAGILAIGTANPANHVIQAEYPDYYFRITNSEHMTDLKEKFKRMCDKSTIRKRHMHLTEEFLKDNPNMCAYMAPSLDARQDIVVVEVPKLGKEAAVKAIKEWGQPKSKITHVVFCTTSGVDMPGADYQLTKLLGLRPSVKRLMMYQQGCFAGGTVLRLAKDLAENNRGARVLVVCSEITAVTFRGPSDTHLDSLVGQALFSDGAAALIVGSDADISAGEKPIFEMVSAAQTILPDSDGAIDGHLREVGLTFHLLKDVPGLISKNIEKSLDEAFKPLGISDWNSLFWIAHPGGPAILDDVEKKLGLKAEKMRATRHVLSEYGNMSSACVLFILDEMRRKSVEDGVATTGEGLEWGVLFGFGPGLTVETVVLHSVPV.

Residue valine 2 is modified to N-acetylvaline. Cysteine 169 is a catalytic residue.

The protein belongs to the thiolase-like superfamily. Chalcone/stilbene synthases family.

It carries out the reaction (E)-4-coumaroyl-CoA + 3 malonyl-CoA + 3 H(+) = 2',4,4',6'-tetrahydroxychalcone + 3 CO2 + 4 CoA. It functions in the pathway secondary metabolite biosynthesis; flavonoid biosynthesis. Its function is as follows. The primary product of this enzyme is 4,2',4',6'-tetrahydroxychalcone (also termed naringenin-chalcone or chalcone) which can under specific conditions spontaneously isomerize into naringenin. This Sinapis alba (White mustard) protein is Chalcone synthase 1 (CHS1).